Here is a 335-residue protein sequence, read N- to C-terminus: GTPase Obg (335 aa).

The region spanning Gly4–Leu162 is the Obg domain. Residues Ala163–Asn332 enclose the OBG-type G domain. GTP-binding positions include Gly169–Ser176, Phe194–Lys198, Asp216–Gly219, Ser283–Asp286, and Ser313–Ile315. Mg(2+)-binding residues include Ser176 and Thr196.

It belongs to the TRAFAC class OBG-HflX-like GTPase superfamily. OBG GTPase family. Monomer. The cofactor is Mg(2+).

It is found in the cytoplasm. Its function is as follows. An essential GTPase which binds GTP, GDP and possibly (p)ppGpp with moderate affinity, with high nucleotide exchange rates and a fairly low GTP hydrolysis rate. Plays a role in control of the cell cycle, stress response, ribosome biogenesis and in those bacteria that undergo differentiation, in morphogenesis control. This is GTPase Obg from Flavobacterium psychrophilum (strain ATCC 49511 / DSM 21280 / CIP 103535 / JIP02/86).